Here is a 249-residue protein sequence, read N- to C-terminus: uncharacterized protein (249 aa).

Belongs to the ycf23 family.

It localises to the plastid. The protein resides in the chloroplast. This is an uncharacterized protein from Cyanidium caldarium (Red alga).